The primary structure comprises 434 residues: 3-isopropylmalate dehydratase large subunit 1 (434 aa).

[4Fe-4S] cluster contacts are provided by C308, C368, and C371.

Belongs to the aconitase/IPM isomerase family. LeuC type 2 subfamily. As to quaternary structure, heterodimer of LeuC and LeuD. [4Fe-4S] cluster is required as a cofactor.

It carries out the reaction (2R,3S)-3-isopropylmalate = (2S)-2-isopropylmalate. It functions in the pathway amino-acid biosynthesis; L-leucine biosynthesis; L-leucine from 3-methyl-2-oxobutanoate: step 2/4. In terms of biological role, catalyzes the isomerization between 2-isopropylmalate and 3-isopropylmalate, via the formation of 2-isopropylmaleate. This chain is 3-isopropylmalate dehydratase large subunit 1, found in Deinococcus radiodurans (strain ATCC 13939 / DSM 20539 / JCM 16871 / CCUG 27074 / LMG 4051 / NBRC 15346 / NCIMB 9279 / VKM B-1422 / R1).